The sequence spans 264 residues: Putative ankyrin repeat domain-containing protein 19 (264 aa).

5 ANK repeats span residues 67-96, 100-129, 133-162, 166-195, and 199-228; these read KDRT…QINI, LNRT…NPNI, YSNT…NIEA, EGNT…NLHA, and FRRT…NIFS.

The polypeptide is Putative ankyrin repeat domain-containing protein 19 (ANKRD19P) (Homo sapiens (Human)).